The sequence spans 1030 residues: Isoleucine--tRNA ligase 2 (1030 aa).

Positions 48–58 match the 'HIGH' region motif; sequence PFATGLPHYGH. A 'KMSKS' region motif is present at residues 589–593; sequence KMSKR. Lysine 592 contacts ATP.

It belongs to the class-I aminoacyl-tRNA synthetase family. IleS type 2 subfamily. Monomer. Zn(2+) is required as a cofactor.

Its subcellular location is the cytoplasm. The enzyme catalyses tRNA(Ile) + L-isoleucine + ATP = L-isoleucyl-tRNA(Ile) + AMP + diphosphate. In terms of biological role, catalyzes the attachment of isoleucine to tRNA(Ile). As IleRS can inadvertently accommodate and process structurally similar amino acids such as valine, to avoid such errors it has two additional distinct tRNA(Ile)-dependent editing activities. One activity is designated as 'pretransfer' editing and involves the hydrolysis of activated Val-AMP. The other activity is designated 'posttransfer' editing and involves deacylation of mischarged Val-tRNA(Ile). Functionally, confers high-level resistance to the antibiotic mupirocin (pseudomonic acid A), an Ile-analog produced by P.fluorescens NCIMB 10586 itself that competitively inhibits activation by Ile-tRNA synthetase, thus inhibiting protein biosynthesis. The polypeptide is Isoleucine--tRNA ligase 2 (ileS2) (Pseudomonas fluorescens).